A 321-amino-acid chain; its full sequence is MYTKILGTGSYLPVQVRSNADLEKMVDTSDEWIVTRTGIRERRIAGPDETVASMGFQAAKKALEMAVIDEGIDKKDIGLIIVATTSSSHAFPSSACQVQQMLGIEDAASFDLAAACAGFTYALSVADQYVKSGAVKHAIVIGSDMLSRALDPEDRGTIILFGDGAGAVVLGASEEPGILSTHLHADGKYGELLALPYPDRQHQEQPAYVTMAGNEVFKVAVTELAHIVDETLQANNLDRSALDWLVPHQANLRIISATAKKLGMGMDKVVITLDRHGNTSAASVPAAFDEAVRDGRIQRGQLVLLEAFGGGFTWGSALVRF.

Active-site residues include C116 and H248. The segment at 249-253 (QANLR) is ACP-binding. Residue N278 is part of the active site.

This sequence belongs to the thiolase-like superfamily. FabH family. Homodimer.

It is found in the cytoplasm. The catalysed reaction is malonyl-[ACP] + acetyl-CoA + H(+) = 3-oxobutanoyl-[ACP] + CO2 + CoA. The protein operates within lipid metabolism; fatty acid biosynthesis. Its function is as follows. Catalyzes the condensation reaction of fatty acid synthesis by the addition to an acyl acceptor of two carbons from malonyl-ACP. Catalyzes the first condensation reaction which initiates fatty acid synthesis and may therefore play a role in governing the total rate of fatty acid production. Possesses both acetoacetyl-ACP synthase and acetyl transacylase activities. Its substrate specificity determines the biosynthesis of branched-chain and/or straight-chain of fatty acids. In Yersinia enterocolitica serotype O:8 / biotype 1B (strain NCTC 13174 / 8081), this protein is Beta-ketoacyl-[acyl-carrier-protein] synthase III.